Consider the following 543-residue polypeptide: Glutamyl-tRNA(Gln) amidotransferase subunit A, chloroplastic/mitochondrial (543 aa).

Catalysis depends on charge relay system residues lysine 123 and serine 198. The Acyl-ester intermediate role is filled by serine 222.

This sequence belongs to the amidase family. GatA subfamily. As to quaternary structure, subunit of the heterotrimeric GatCAB amidotransferase (AdT) complex, composed of A, B and C subunits.

Its subcellular location is the mitochondrion. The protein resides in the plastid. It is found in the chloroplast stroma. The catalysed reaction is L-glutamyl-tRNA(Gln) + L-glutamine + ATP + H2O = L-glutaminyl-tRNA(Gln) + L-glutamate + ADP + phosphate + H(+). Allows the formation of correctly charged Gln-tRNA(Gln) through the transamidation of misacylated Glu-tRNA(Gln) in chloroplasts and mitochondria. The reaction takes place in the presence of glutamine and ATP through an activated gamma-phospho-Glu-tRNA(Gln). The protein is Glutamyl-tRNA(Gln) amidotransferase subunit A, chloroplastic/mitochondrial of Oryza sativa subsp. japonica (Rice).